The sequence spans 1147 residues: SR-related and CTD-associated factor 4 (1147 aa).

The CID domain occupies 1–139 (MDAVNAFNQE…PLLDMAAGTS (139 aa)). Lys-49 carries the N6-acetyllysine modification. 4 disordered regions span residues 145–179 (AENV…AVPQ), 235–254 (KTTP…PEQK), 269–331 (DEPE…QQPA), and 424–502 (VKRH…KPET). Residue Ser-154 is modified to Phosphoserine. Composition is skewed to low complexity over residues 283-292 (TAVTTTAPAA) and 299-310 (TATVPAAAAPAA). Basic and acidic residues predominate over residues 424–433 (VKRHMSDNRK). The segment covering 434-475 (SRSRSASRSPKRRRSRSGSRSRRSRHRRSRSRSRDRRRHSPR) has biased composition (basic residues). Over residues 477–492 (RSQERRDREKERERRQ) the composition is skewed to basic and acidic residues. The RRM domain occupies 508 to 582 (TTLWVGQLDK…KSIKIAWALN (75 aa)). Disordered regions lie at residues 629-661 (DWKG…IPKP) and 879-1147 (RPMP…EAPR). Ser-656 bears the Phosphoserine mark. Residues 879–913 (RPMPPHMMHRGPPPGPGGFAMPPPHGMKGPFPPHG) show a composition bias toward pro residues. The segment covering 941–965 (QQPPQQPQQQPQPQAPQQPQQQQQQ) has biased composition (low complexity). The span at 966–977 (QPPPSQQPPPTQ) shows a compositional bias: pro residues. Ser-1004 carries the post-translational modification Phosphoserine. Residues 1009-1085 (VENDRERYGN…RGKEKPEVTD (77 aa)) are compositionally biased toward basic and acidic residues.

As to quaternary structure, interacts with POLR2A; via C-terminal heptapeptide repeat domain (CTD) phosphorylated at 'Ser-2' and 'Ser-5'.

It localises to the nucleus. In terms of biological role, anti-terminator protein required to prevent early mRNA termination during transcription. Together with SCAF8, acts by suppressing the use of early, alternative poly(A) sites, thereby preventing the accumulation of non-functional truncated proteins. Mechanistically, associates with the phosphorylated C-terminal heptapeptide repeat domain (CTD) of the largest RNA polymerase II subunit (POLR2A), and subsequently binds nascent RNA upstream of early polyadenylation sites to prevent premature mRNA transcript cleavage and polyadenylation. Independently of SCAF8, also acts as a suppressor of transcriptional readthrough. This is SR-related and CTD-associated factor 4 from Homo sapiens (Human).